The primary structure comprises 862 residues: Protein argonaute-2 (862 aa).

The PAZ domain occupies 232–351 (PVIEFMCEVL…LPLEVCNIVA (120 aa)). Interaction with guide RNA regions lie at residues 314–319 (YFKDRH) and 527–569 (GKTP…LCLK). The Piwi domain maps to 520-821 (LVVVILPGKT…VAFRARYHLV (302 aa)). The tract at residues 590–593 (FQQP) is interaction with GW182 family members. Asp600 serves as a coordination point for a divalent metal cation. The segment at 653–663 (LIQFYKSTRFK) is interaction with GW182 family members. Residue Asp672 participates in a divalent metal cation binding. 3 interaction with guide RNA regions span residues 712–713 (KR), 756–764 (HAGIQGTSR), and 793–815 (YVRCTRSVSIPAPAYYAHLVAFR). His810 lines the a divalent metal cation pocket. Positions 825–847 (HDSAEGSHTSGQSNGRDQQALAK) are disordered. Residues 830–841 (GSHTSGQSNGRD) show a composition bias toward polar residues.

This sequence belongs to the argonaute family. Ago subfamily. In terms of assembly, component of the RISC loading complex (RLC), or micro-RNA (miRNA) loading complex (miRLC), which is composed of dicer1, ago2 and tarbp2. Note that the trimeric RLC/miRLC is also referred to as RISC. Mg(2+) is required as a cofactor. It depends on Mn(2+) as a cofactor.

The protein localises to the cytoplasm. Its subcellular location is the P-body. The catalysed reaction is Endonucleolytic cleavage to 5'-phosphomonoester.. Functionally, required for RNA-mediated gene silencing (RNAi) by the RNA-induced silencing complex (RISC). The 'minimal RISC' appears to include ago2 bound to a short guide RNA such as a microRNA (miRNA) or short interfering RNA (siRNA). These guide RNAs direct RISC to complementary mRNAs that are targets for RISC-mediated gene silencing. The precise mechanism of gene silencing depends on the degree of complementarity between the miRNA or siRNA and its target. Binding of RISC to a perfectly complementary mRNA generally results in silencing due to endonucleolytic cleavage of the mRNA specifically by ago2. Binding of RISC to a partially complementary mRNA results in silencing through inhibition of translation, and this is independent of endonuclease activity. The inhibition of translational initiation leads to the accumulation of the affected mRNA in cytoplasmic processing bodies (P-bodies), where mRNA degradation may subsequently occur. The chain is Protein argonaute-2 (ago2) from Xenopus laevis (African clawed frog).